A 231-amino-acid chain; its full sequence is Uracil phosphoribosyltransferase (231 aa).

Position 38–42 (38–42 (KGLVR)) interacts with GTP. Residues arginine 87, arginine 112, and 140 to 148 (DPMIATGST) each bind 5-phospho-alpha-D-ribose 1-diphosphate. Uracil contacts are provided by residues isoleucine 203 and 208–210 (GDA). Residue aspartate 209 coordinates 5-phospho-alpha-D-ribose 1-diphosphate.

Belongs to the UPRTase family. Requires Mg(2+) as cofactor.

It carries out the reaction UMP + diphosphate = 5-phospho-alpha-D-ribose 1-diphosphate + uracil. It participates in pyrimidine metabolism; UMP biosynthesis via salvage pathway; UMP from uracil: step 1/1. With respect to regulation, allosterically activated by GTP. Functionally, catalyzes the conversion of uracil and 5-phospho-alpha-D-ribose 1-diphosphate (PRPP) to UMP and diphosphate. This chain is Uracil phosphoribosyltransferase, found in Methanococcus maripaludis (strain DSM 14266 / JCM 13030 / NBRC 101832 / S2 / LL).